Reading from the N-terminus, the 393-residue chain is Succinate--CoA ligase [ADP-forming] subunit beta (393 aa).

The region spanning 9-237 (RDLFAKHGVP…KDAANPLEAA (229 aa)) is the ATP-grasp domain. ATP is bound by residues Lys45, 52 to 54 (GRG), Glu92, Pro95, and Glu100. Mg(2+) is bound by residues Asn192 and Asp206. Substrate-binding positions include Asn257 and 319-321 (GIT).

This sequence belongs to the succinate/malate CoA ligase beta subunit family. In terms of assembly, heterotetramer of two alpha and two beta subunits. Requires Mg(2+) as cofactor.

It carries out the reaction succinate + ATP + CoA = succinyl-CoA + ADP + phosphate. The enzyme catalyses GTP + succinate + CoA = succinyl-CoA + GDP + phosphate. It participates in carbohydrate metabolism; tricarboxylic acid cycle; succinate from succinyl-CoA (ligase route): step 1/1. Its function is as follows. Succinyl-CoA synthetase functions in the citric acid cycle (TCA), coupling the hydrolysis of succinyl-CoA to the synthesis of either ATP or GTP and thus represents the only step of substrate-level phosphorylation in the TCA. The beta subunit provides nucleotide specificity of the enzyme and binds the substrate succinate, while the binding sites for coenzyme A and phosphate are found in the alpha subunit. The chain is Succinate--CoA ligase [ADP-forming] subunit beta from Streptomyces griseus subsp. griseus (strain JCM 4626 / CBS 651.72 / NBRC 13350 / KCC S-0626 / ISP 5235).